The sequence spans 155 residues: Transcriptional repressor NrdR (155 aa).

Residues 3-34 (CPFCGNIDTQVKDSRPAEDHVSIRRRRFCPAC) fold into a zinc finger. Positions 49–139 (LVVIKSSGKR…VYKNFQAADD (91 aa)) constitute an ATP-cone domain.

It belongs to the NrdR family. The cofactor is Zn(2+).

Functionally, negatively regulates transcription of bacterial ribonucleotide reductase nrd genes and operons by binding to NrdR-boxes. The polypeptide is Transcriptional repressor NrdR (Cereibacter sphaeroides (strain ATCC 17029 / ATH 2.4.9) (Rhodobacter sphaeroides)).